The sequence spans 232 residues: Enolase-phosphatase E1 (232 aa).

The protein belongs to the HAD-like hydrolase superfamily. MasA/MtnC family. As to quaternary structure, monomer. The cofactor is Mg(2+).

It catalyses the reaction 5-methylsulfanyl-2,3-dioxopentyl phosphate + H2O = 1,2-dihydroxy-5-(methylsulfanyl)pent-1-en-3-one + phosphate. It participates in amino-acid biosynthesis; L-methionine biosynthesis via salvage pathway; L-methionine from S-methyl-5-thio-alpha-D-ribose 1-phosphate: step 3/6. The protein operates within amino-acid biosynthesis; L-methionine biosynthesis via salvage pathway; L-methionine from S-methyl-5-thio-alpha-D-ribose 1-phosphate: step 4/6. Bifunctional enzyme that catalyzes the enolization of 2,3-diketo-5-methylthiopentyl-1-phosphate (DK-MTP-1-P) into the intermediate 2-hydroxy-3-keto-5-methylthiopentenyl-1-phosphate (HK-MTPenyl-1-P), which is then dephosphorylated to form the acireductone 1,2-dihydroxy-3-keto-5-methylthiopentene (DHK-MTPene). The sequence is that of Enolase-phosphatase E1 from Xylella fastidiosa (strain 9a5c).